The sequence spans 146 residues: uncharacterized protein (146 aa).

This is an uncharacterized protein from Haemophilus influenzae (strain ATCC 51907 / DSM 11121 / KW20 / Rd).